An 86-amino-acid chain; its full sequence is Large ribosomal subunit protein uL23 (86 aa).

Belongs to the universal ribosomal protein uL23 family. As to quaternary structure, part of the 50S ribosomal subunit. Contacts protein L29.

Its function is as follows. Binds to 23S rRNA. One of the proteins that surrounds the polypeptide exit tunnel on the outside of the ribosome. The protein is Large ribosomal subunit protein uL23 of Methanococcus aeolicus (strain ATCC BAA-1280 / DSM 17508 / OCM 812 / Nankai-3).